The primary structure comprises 460 residues: MLKVLIPTIMLFPTIWLTPPKWLWSTTTAHGLLIALISLTWLKWSSEVGSATSSLYLASDPLSTPLLGLTCWLLPLMVLASQNHITPEPIIRQRLYITLLASLQTFLIMAFGATEIIMFYIMFEATLIPTLIIITRWGNQTERLNAGTYFLFYTLAGSLPLLVALLLLQQTNGTLSLLILQHSQPLALTSWGHKIWWAGCLIAFLVKMPLYGVHLWLPKAHVEAPVAGSMVLAAVLLKLGGYGMMRMMVVLDPLSKELAYPFIILALWGIIMTGSICLRQTDLKSLIAYSSVSHMGLVAGGILIQTPWGFTGAIILMIAHGLVSSALFCLANTAYERTHSRTMILARGLQMIFPLTAVWWFIANLANLALPPLPNLMGELMIITTLFNWSPLTIILTGTGTLITAGYSLYLFLMSQRGPTPKHIVGLPPFHTREHLLMALHLIPVLLLMTKPEIMWGWCY.

A run of 12 helical transmembrane segments spans residues 20-42, 61-81, 93-113, 114-134, 148-168, 195-215, 225-245, 258-278, 285-304, 309-331, 351-371, and 394-414; these read PKWL…LTWL, PLST…VLAS, QRLY…AFGA, TEII…LIII, TYFL…LLLL, IWWA…GVHL, PVAG…YGMM, LAYP…SICL, SLIA…GILI, GFTG…FCLA, MIFP…LALP, and IILT…LFLM.

Belongs to the complex I subunit 4 family.

It localises to the mitochondrion membrane. It carries out the reaction a ubiquinone + NADH + 5 H(+)(in) = a ubiquinol + NAD(+) + 4 H(+)(out). Functionally, core subunit of the mitochondrial membrane respiratory chain NADH dehydrogenase (Complex I) that is believed to belong to the minimal assembly required for catalysis. Complex I functions in the transfer of electrons from NADH to the respiratory chain. The immediate electron acceptor for the enzyme is believed to be ubiquinone. The polypeptide is NADH-ubiquinone oxidoreductase chain 4 (MT-ND4) (Formosania lacustris (Oriental stream loach)).